The following is a 261-amino-acid chain: Enolase-phosphatase E1 (261 aa).

Mg(2+) contacts are provided by aspartate 16 and glutamate 18. Substrate is bound by residues 153–154 (SS) and lysine 187. Aspartate 212 contacts Mg(2+).

It belongs to the HAD-like hydrolase superfamily. MasA/MtnC family. In terms of assembly, monomer. Mg(2+) serves as cofactor.

Its subcellular location is the cytoplasm. It is found in the nucleus. It carries out the reaction 5-methylsulfanyl-2,3-dioxopentyl phosphate + H2O = 1,2-dihydroxy-5-(methylsulfanyl)pent-1-en-3-one + phosphate. It functions in the pathway amino-acid biosynthesis; L-methionine biosynthesis via salvage pathway; L-methionine from S-methyl-5-thio-alpha-D-ribose 1-phosphate: step 3/6. The protein operates within amino-acid biosynthesis; L-methionine biosynthesis via salvage pathway; L-methionine from S-methyl-5-thio-alpha-D-ribose 1-phosphate: step 4/6. In terms of biological role, bifunctional enzyme that catalyzes the enolization of 2,3-diketo-5-methylthiopentyl-1-phosphate (DK-MTP-1-P) into the intermediate 2-hydroxy-3-keto-5-methylthiopentenyl-1-phosphate (HK-MTPenyl-1-P), which is then dephosphorylated to form the acireductone 1,2-dihydroxy-3-keto-5-methylthiopentene (DHK-MTPene). The sequence is that of Enolase-phosphatase E1 from Bos taurus (Bovine).